Here is a 436-residue protein sequence, read N- to C-terminus: GTPase Der (436 aa).

EngA-type G domains follow at residues 4 to 167 (PIVA…KEEE) and 176 to 351 (IRLS…ENHK). GTP-binding positions include 10–17 (GRPNVGKS), 57–61 (DTGGI), 119–122 (NKVD), 182–189 (GRPNVGKS), 229–233 (DTAGM), and 294–297 (NKWD). The 85-residue stretch at 352-436 (KRVQSSTLNE…PVHIIARKRN (85 aa)) folds into the KH-like domain.

Belongs to the TRAFAC class TrmE-Era-EngA-EngB-Septin-like GTPase superfamily. EngA (Der) GTPase family. Associates with the 50S ribosomal subunit.

GTPase that plays an essential role in the late steps of ribosome biogenesis. This Staphylococcus saprophyticus subsp. saprophyticus (strain ATCC 15305 / DSM 20229 / NCIMB 8711 / NCTC 7292 / S-41) protein is GTPase Der.